A 208-amino-acid polypeptide reads, in one-letter code: LexA repressor (208 aa).

Positions 30–50 (VREICAAVKLSSTSTVHGHLA) form a DNA-binding region, H-T-H motif. Residues serine 129 and lysine 167 each act as for autocatalytic cleavage activity in the active site.

Belongs to the peptidase S24 family. As to quaternary structure, homodimer.

It carries out the reaction Hydrolysis of Ala-|-Gly bond in repressor LexA.. In terms of biological role, represses a number of genes involved in the response to DNA damage (SOS response), including recA and lexA. In the presence of single-stranded DNA, RecA interacts with LexA causing an autocatalytic cleavage which disrupts the DNA-binding part of LexA, leading to derepression of the SOS regulon and eventually DNA repair. This is LexA repressor from Lactobacillus helveticus (strain DPC 4571).